A 327-amino-acid chain; its full sequence is Eukaryotic translation initiation factor 3 subunit I (327 aa).

WD repeat units lie at residues 8–49 (GHER…GSYD), 51–89 (HNGA…CIYT), 188–227 (VHRY…KLKQ), 229–268 (KSER…GHFE), and 285–324 (GHFG…LGFT).

This sequence belongs to the eIF-3 subunit I family. Component of the eukaryotic translation initiation factor 3 (eIF-3) complex.

The protein resides in the cytoplasm. Its function is as follows. Component of the eukaryotic translation initiation factor 3 (eIF-3) complex, which is involved in protein synthesis of a specialized repertoire of mRNAs and, together with other initiation factors, stimulates binding of mRNA and methionyl-tRNAi to the 40S ribosome. The eIF-3 complex specifically targets and initiates translation of a subset of mRNAs involved in cell proliferation. This is Eukaryotic translation initiation factor 3 subunit I from Caenorhabditis briggsae.